Reading from the N-terminus, the 348-residue chain is Fe(3+) ions import ATP-binding protein FbpC (348 aa).

The ABC transporter domain occupies 7-237; sequence VELRNVTKRF…PASRFMASFM (231 aa). ATP is bound at residue 39–46; sequence GPSGCGKT.

Belongs to the ABC transporter superfamily. Fe(3+) ion importer (TC 3.A.1.10) family. The complex is composed of two ATP-binding proteins (FbpC), two transmembrane proteins (FbpB) and a solute-binding protein (FbpA).

Its subcellular location is the cell inner membrane. The catalysed reaction is Fe(3+)(out) + ATP + H2O = Fe(3+)(in) + ADP + phosphate + H(+). Part of the ABC transporter complex FbpABC involved in Fe(3+) ions import. Responsible for energy coupling to the transport system. In Escherichia coli (strain K12), this protein is Fe(3+) ions import ATP-binding protein FbpC.